The primary structure comprises 841 residues: Taste receptor type 1 member 1 (841 aa).

The signal sequence occupies residues 1-20 (MLLCTARLVGLQLLISCCWA). The Extracellular segment spans residues 21–567 (FACHSTESSP…VFLALREHTS (547 aa)). N-linked (GlcNAc...) asparagine glycans are attached at residues Asn-87, Asn-88, Asn-95, Asn-291, Asn-479, and Asn-529. The chain crosses the membrane as a helical span at residues 568 to 588 (WVLLAANTLLLLLLLGTAGLF). The Cytoplasmic segment spans residues 589-603 (AWHLDTPVVRSAGGR). The chain crosses the membrane as a helical span at residues 604–624 (LCFLMLGSLAAGSGSLYGFFG). Over 625 to 639 (EPTRPACLLRQALFA) the chain is Extracellular. A helical membrane pass occupies residues 640 to 660 (LGFTIFLSCLTVRSFQLIIIF). The Cytoplasmic portion of the chain corresponds to 661-680 (KFSTKVPTFYHAWVQNHGAG). The chain crosses the membrane as a helical span at residues 681 to 701 (LFVMISSAAQLLICLTWLVVW). The Extracellular segment spans residues 702–725 (TPLPAREYQRFPHLVMLECTETNS). A helical transmembrane segment spans residues 726 to 746 (LGFILAFLYNGLLSISAFACS). Residues 747–761 (YLGKDLPENYNEAKC) lie on the Cytoplasmic side of the membrane. The helical transmembrane segment at 762-782 (VTFSLLFNFVSWIAFFTTASV) threads the bilayer. Residues 783-795 (YDGKYLPAANMMA) lie on the Extracellular side of the membrane. Residues 796–816 (GLSSLSSGFGGYFLPKCYVIL) form a helical membrane-spanning segment. Residues 817–841 (CRPDLNSTEHFQASIQDYTRRCGST) are Cytoplasmic-facing.

It belongs to the G-protein coupled receptor 3 family. TAS1R subfamily. As to quaternary structure, forms heterodimers with TAS1R3.

It is found in the cell membrane. Its function is as follows. Putative taste receptor. TAS1R1/TAS1R3 responds to the umami taste stimulus (the taste of monosodium glutamate). Sequence differences within and between species can significantly influence the selectivity and specificity of taste responses. The protein is Taste receptor type 1 member 1 (TAS1R1) of Homo sapiens (Human).